The chain runs to 642 residues: Threonine--tRNA ligase (642 aa).

A TGS domain is found at 1 to 61 (MPVITITNGL…MQDSKLDIIT (61 aa)). The segment at 243-534 (DHRKIGQQLD…LIEEYAGFFP (292 aa)) is catalytic. Zn(2+) contacts are provided by cysteine 334, histidine 385, and histidine 511.

This sequence belongs to the class-II aminoacyl-tRNA synthetase family. In terms of assembly, homodimer. It depends on Zn(2+) as a cofactor.

The protein resides in the cytoplasm. The catalysed reaction is tRNA(Thr) + L-threonine + ATP = L-threonyl-tRNA(Thr) + AMP + diphosphate + H(+). In terms of biological role, catalyzes the attachment of threonine to tRNA(Thr) in a two-step reaction: L-threonine is first activated by ATP to form Thr-AMP and then transferred to the acceptor end of tRNA(Thr). Also edits incorrectly charged L-seryl-tRNA(Thr). This is Threonine--tRNA ligase from Baumannia cicadellinicola subsp. Homalodisca coagulata.